We begin with the raw amino-acid sequence, 395 residues long: Phosphatidylinositol 4-phosphate 5-kinase-like protein 1 (395 aa).

Residues 1–25 (MATPSLRSHEIPAHSQEAGNKSISS) form a disordered region. The PIPK domain maps to 37–394 (ARQSRVGLFE…RLCRWAEVHT (358 aa)).

As to quaternary structure, interacts with type I phosphatidylinositol 4-phosphate 5-kinases, including PIP5K1A and PIP5K1B. Highly expressed in brain and testis, relatively to heart, spleen, lung, liver, skeletal muscle and kidney.

Its subcellular location is the cytoplasm. The protein resides in the membrane. Functionally, may act as a scaffold to localize and regulate type I phosphatidylinositol 4-phosphate 5-kinases to specific compartments within the cell, where they generate PI(4,5)P2 for actin nucleation, signaling and scaffold protein recruitment and conversion to PI(3,4,5)P3. This Mus musculus (Mouse) protein is Phosphatidylinositol 4-phosphate 5-kinase-like protein 1 (Pip5kl1).